The following is a 235-amino-acid chain: MHLLIPAAGSGKRMGAAVNKLLLPLLGQPILAWTLQAADRASSIEWIGILSQPGDWPAIEQILAAMDLSTPVQLLQGGATRQESVYRGVEYLYNLGTVERVLIHDGARCLATPKLFDRCSAALQQVDGLIAGIPVKDTIKVTETGPKGIQIQSTPERSRLWAAQTPQGFRLSLLWQAHREALAQGWQVTDDAALFEKLGWPVYIVEGEESNLKLTTPWDLVLAEQILQQRLELAR.

This sequence belongs to the IspD/TarI cytidylyltransferase family. IspD subfamily.

The catalysed reaction is 2-C-methyl-D-erythritol 4-phosphate + CTP + H(+) = 4-CDP-2-C-methyl-D-erythritol + diphosphate. It participates in isoprenoid biosynthesis; isopentenyl diphosphate biosynthesis via DXP pathway; isopentenyl diphosphate from 1-deoxy-D-xylulose 5-phosphate: step 2/6. In terms of biological role, catalyzes the formation of 4-diphosphocytidyl-2-C-methyl-D-erythritol from CTP and 2-C-methyl-D-erythritol 4-phosphate (MEP). The chain is 2-C-methyl-D-erythritol 4-phosphate cytidylyltransferase from Synechococcus sp. (strain JA-3-3Ab) (Cyanobacteria bacterium Yellowstone A-Prime).